The sequence spans 294 residues: Glycine--tRNA ligase alpha subunit (294 aa).

It belongs to the class-II aminoacyl-tRNA synthetase family. As to quaternary structure, tetramer of two alpha and two beta subunits.

It localises to the cytoplasm. The catalysed reaction is tRNA(Gly) + glycine + ATP = glycyl-tRNA(Gly) + AMP + diphosphate. The polypeptide is Glycine--tRNA ligase alpha subunit (Trichormus variabilis (strain ATCC 29413 / PCC 7937) (Anabaena variabilis)).